The primary structure comprises 523 residues: 2-isopropylmalate synthase (523 aa).

The Pyruvate carboxyltransferase domain occupies 5–267 (VIIFDTTLRD…HTAINHQEIW (263 aa)). Mn(2+) is bound by residues aspartate 14, histidine 202, histidine 204, and asparagine 238. The tract at residues 392–523 (RLDYFSVQSG…QHNENNKETV (132 aa)) is regulatory domain.

It belongs to the alpha-IPM synthase/homocitrate synthase family. LeuA type 1 subfamily. As to quaternary structure, homodimer. The cofactor is Mn(2+).

It localises to the cytoplasm. The enzyme catalyses 3-methyl-2-oxobutanoate + acetyl-CoA + H2O = (2S)-2-isopropylmalate + CoA + H(+). Its pathway is amino-acid biosynthesis; L-leucine biosynthesis; L-leucine from 3-methyl-2-oxobutanoate: step 1/4. Catalyzes the condensation of the acetyl group of acetyl-CoA with 3-methyl-2-oxobutanoate (2-ketoisovalerate) to form 3-carboxy-3-hydroxy-4-methylpentanoate (2-isopropylmalate). This chain is 2-isopropylmalate synthase, found in Shigella sonnei (strain Ss046).